The sequence spans 137 residues: Structural protein A137R (137 aa).

The protein belongs to the asfivirus A137R family. In terms of assembly, interacts with host TBK1.

It localises to the virion. It is found in the host cytoplasm. Its function is as follows. Plays a role in the inhibition of the host innate immune response. Mechanistically, promotes the autophagy-mediated lysosomal degradation of host TBK1 and affects IRF3 nuclear translocation to block type I IFN production. The protein is Structural protein A137R of Ornithodoros (relapsing fever ticks).